A 433-amino-acid chain; its full sequence is UPF0761 membrane protein Sde_0901 (433 aa).

The next 6 membrane-spanning stretches (helical) occupy residues 46–66 (LFAM…FPAF), 103–123 (LSAA…TNIE), 142–162 (FLLY…GLAM), 185–205 (FFSY…FAAV), 217–237 (IGGI…GWVV), and 247–267 (GAFA…MIIL).

The protein belongs to the UPF0761 family.

It localises to the cell inner membrane. The chain is UPF0761 membrane protein Sde_0901 from Saccharophagus degradans (strain 2-40 / ATCC 43961 / DSM 17024).